A 159-amino-acid polypeptide reads, in one-letter code: SsrA-binding protein (159 aa).

The disordered stretch occupies residues 134–159 (KEHDKRDTERDRDWSRDKERLMKHNA).

The protein belongs to the SmpB family.

Its subcellular location is the cytoplasm. Required for rescue of stalled ribosomes mediated by trans-translation. Binds to transfer-messenger RNA (tmRNA), required for stable association of tmRNA with ribosomes. tmRNA and SmpB together mimic tRNA shape, replacing the anticodon stem-loop with SmpB. tmRNA is encoded by the ssrA gene; the 2 termini fold to resemble tRNA(Ala) and it encodes a 'tag peptide', a short internal open reading frame. During trans-translation Ala-aminoacylated tmRNA acts like a tRNA, entering the A-site of stalled ribosomes, displacing the stalled mRNA. The ribosome then switches to translate the ORF on the tmRNA; the nascent peptide is terminated with the 'tag peptide' encoded by the tmRNA and targeted for degradation. The ribosome is freed to recommence translation, which seems to be the essential function of trans-translation. The polypeptide is SsrA-binding protein (Marinomonas sp. (strain MWYL1)).